A 166-amino-acid chain; its full sequence is Interferon gamma (166 aa).

Residues 1 to 23 (MKYTSYFLALQLCLLLGFSGSYG) form the signal peptide. Gln-24 is modified (pyrrolidone carboxylic acid). Residues Asn-39 and Asn-106 are each glycosylated (N-linked (GlcNAc...) asparagine).

The protein belongs to the type II (or gamma) interferon family. In terms of assembly, homodimer. Interacts with IFNGR1 (via extracellular domain); this interaction promotes IFNGR1 dimerization. In terms of tissue distribution, released primarily from activated T lymphocytes.

Its subcellular location is the secreted. In terms of biological role, type II interferon produced by immune cells such as T-cells and NK cells that plays crucial roles in antimicrobial, antiviral, and antitumor responses by activating effector immune cells and enhancing antigen presentation. Primarily signals through the JAK-STAT pathway after interaction with its receptor IFNGR1 to affect gene regulation. Upon IFNG binding, IFNGR1 intracellular domain opens out to allow association of downstream signaling components JAK2, JAK1 and STAT1, leading to STAT1 activation, nuclear translocation and transcription of IFNG-regulated genes. Many of the induced genes are transcription factors such as IRF1 that are able to further drive regulation of a next wave of transcription. Plays a role in class I antigen presentation pathway by inducing a replacement of catalytic proteasome subunits with immunoproteasome subunits. In turn, increases the quantity, quality, and repertoire of peptides for class I MHC loading. Increases the efficiency of peptide generation also by inducing the expression of activator PA28 that associates with the proteasome and alters its proteolytic cleavage preference. Up-regulates as well MHC II complexes on the cell surface by promoting expression of several key molecules such as cathepsins B/CTSB, H/CTSH, and L/CTSL. Participates in the regulation of hematopoietic stem cells during development and under homeostatic conditions by affecting their development, quiescence, and differentiation. This is Interferon gamma (IFNG) from Moschus berezovskii (Chinese forest musk deer).